The chain runs to 143 residues: Pathogenesis-related protein P2 (143 aa).

Positions 1–23 (MERVNKLCVAFFVINMMMAVAAA) are cleaved as a signal peptide. A Barwin domain is found at 24–143 (QSATNVRATY…LNVNYEFVNC (120 aa)). 3 disulfide bridges follow: Cys-52–Cys-84, Cys-73–Cys-107, and Cys-87–Cys-143.

The protein resides in the secreted. It is found in the cell wall. This chain is Pathogenesis-related protein P2, found in Solanum lycopersicum (Tomato).